A 348-amino-acid chain; its full sequence is Alcohol dehydrogenase 2 (348 aa).

Ser-2 carries the N-acetylserine modification. Cys-44 is a Zn(2+) binding site. His-45, Thr-46, and His-49 together coordinate NAD(+). Zn(2+)-binding residues include His-67, Glu-68, Cys-98, Cys-101, Cys-104, Cys-112, and Cys-154. NAD(+) is bound by residues Gly-181, Gly-182, Leu-183, Asp-202, and Lys-207. Ser-213 is subject to Phosphoserine. Phe-222 contacts NAD(+). Thr-223 bears the Phosphothreonine mark. Residues Lys-226 and Lys-234 each participate in a glycyl lysine isopeptide (Lys-Gly) (interchain with G-Cter in ubiquitin) cross-link. Val-269 contributes to the NAD(+) binding site. At Ser-279 the chain carries Phosphoserine. Residue Lys-287 forms a Glycyl lysine isopeptide (Lys-Gly) (interchain with G-Cter in ubiquitin) linkage. NAD(+) is bound by residues Ser-294 and Val-296. Ser-316 bears the Phosphoserine mark. Lys-319 participates in a covalent cross-link: Glycyl lysine isopeptide (Lys-Gly) (interchain with G-Cter in ubiquitin). Residue Arg-341 coordinates NAD(+).

It belongs to the zinc-containing alcohol dehydrogenase family. Homotetramer. Requires Zn(2+) as cofactor.

It is found in the cytoplasm. The catalysed reaction is a primary alcohol + NAD(+) = an aldehyde + NADH + H(+). It carries out the reaction a secondary alcohol + NAD(+) = a ketone + NADH + H(+). The enzyme catalyses ethanol + NAD(+) = acetaldehyde + NADH + H(+). It catalyses the reaction butan-1-ol + NAD(+) = butanal + NADH + H(+). The catalysed reaction is hexan-1-ol + NAD(+) = hexanal + NADH + H(+). In terms of biological role, preferentially oxidative, glucose-repressed isozyme that catalyzes the conversion of ethanol to acetaldehyde. Main enzyme involved in ethanol consumption. Acts on a variety of primary unbranched aliphatic alcohols. Also produces ethanol from glucose, albeit less than ADH1. The sequence is that of Alcohol dehydrogenase 2 (ADH2) from Saccharomyces cerevisiae (strain ATCC 204508 / S288c) (Baker's yeast).